A 56-amino-acid polypeptide reads, in one-letter code: Large ribosomal subunit protein bL32 (56 aa).

A disordered region spans residues 1–37 (MAVQQNKKSRSKRGMRRSHDALSTAQLSVDATSGELH). A compositionally biased stretch (basic residues) spans 7 to 16 (KKSRSKRGMR). The span at 21–31 (ALSTAQLSVDA) shows a compositional bias: polar residues.

It belongs to the bacterial ribosomal protein bL32 family.

The protein is Large ribosomal subunit protein bL32 of Shewanella pealeana (strain ATCC 700345 / ANG-SQ1).